A 426-amino-acid polypeptide reads, in one-letter code: Enolase 2 (426 aa).

Q163 contacts (2R)-2-phosphoglycerate. Residue E205 is the Proton donor of the active site. 3 residues coordinate Mg(2+): D242, E285, and D312. The (2R)-2-phosphoglycerate site is built by K337, R366, S367, and K388. Residue K337 is the Proton acceptor of the active site.

This sequence belongs to the enolase family. It depends on Mg(2+) as a cofactor.

Its subcellular location is the cytoplasm. It localises to the secreted. It is found in the cell surface. It catalyses the reaction (2R)-2-phosphoglycerate = phosphoenolpyruvate + H2O. The protein operates within carbohydrate degradation; glycolysis; pyruvate from D-glyceraldehyde 3-phosphate: step 4/5. Functionally, catalyzes the reversible conversion of 2-phosphoglycerate (2-PG) into phosphoenolpyruvate (PEP). It is essential for the degradation of carbohydrates via glycolysis. This chain is Enolase 2, found in Methanospirillum hungatei JF-1 (strain ATCC 27890 / DSM 864 / NBRC 100397 / JF-1).